The chain runs to 515 residues: Iridoid oxidase (515 aa).

The next 2 membrane-spanning stretches (helical) occupy residues 8–28 (SLNP…IIFV) and 180–200 (AVQL…NLML). C455 provides a ligand contact to heme.

It belongs to the cytochrome P450 family. As to expression, expressed in the leaf internal phloem-associated parenchyma (IPAP) inside the mesophyll.

The protein resides in the endoplasmic reticulum membrane. The catalysed reaction is (+)-cis-trans-nepetalactol + 3 reduced [NADPH--hemoprotein reductase] + 3 O2 = 7-deoxyloganetate + 3 oxidized [NADPH--hemoprotein reductase] + 4 H2O + 4 H(+). Its pathway is alkaloid biosynthesis. In terms of biological role, component of the seco-iridoid and derivatives monoterpenoid indole alkaloids (MIAs, e.g. vincristine, quinine, and strychnine) biosynthesis pathway. Catalyzes the conversion of cis-trans-nepetalactol (iridodial) into 7-deoxyloganetic acid. Also converts iridotrial into 7-deoxyloganetic acid. The sequence is that of Iridoid oxidase from Catharanthus roseus (Madagascar periwinkle).